The sequence spans 104 residues: Large ribosomal subunit protein bL21 (104 aa).

This sequence belongs to the bacterial ribosomal protein bL21 family. In terms of assembly, part of the 50S ribosomal subunit. Contacts protein L20.

Its function is as follows. This protein binds to 23S rRNA in the presence of protein L20. This chain is Large ribosomal subunit protein bL21, found in Leptospira interrogans serogroup Icterohaemorrhagiae serovar copenhageni (strain Fiocruz L1-130).